Here is a 375-residue protein sequence, read N- to C-terminus: cAMP-dependent protein kinase regulatory subunit (375 aa).

The segment at 28–142 (RFCADYFNER…SLYKSVSHNF (115 aa)) is dimerization and phosphorylation. Residues 41 to 50 (REEADDDGPR) show a composition bias toward basic and acidic residues. Positions 41-102 (REEADDDGPR…EPAAPFTRRT (62 aa)) are disordered. The span at 64–82 (GSSSRSTDGSLFRSSFADT) shows a compositional bias: polar residues. Low complexity predominate over residues 83-97 (SSEGPGSASSEPAAP). At S103 the chain carries Phosphoserine. 3',5'-cyclic AMP contacts are provided by residues 143 to 258 (LFGN…FLKE), E208, R217, 261 to 375 (ILSD…DPTK), E328, and R337.

Belongs to the cAMP-dependent kinase regulatory chain family. As to quaternary structure, tetramer, composed of 2 regulatory (R) and 2 catalytic (C) subunits. In the presence of cAMP it dissociates into 2 active monomeric C subunits and an R dimer.

The protein is cAMP-dependent protein kinase regulatory subunit (PKAR) of Yarrowia lipolytica (strain CLIB 122 / E 150) (Yeast).